We begin with the raw amino-acid sequence, 251 residues long: Triosephosphate isomerase (251 aa).

9-11 contributes to the substrate binding site; sequence NWK. H95 acts as the Electrophile in catalysis. The Proton acceptor role is filled by E167. Substrate is bound by residues G173, S213, and 234–235; that span reads GG. A Phosphoserine modification is found at S213.

The protein belongs to the triosephosphate isomerase family. Homodimer.

It localises to the cytoplasm. The catalysed reaction is D-glyceraldehyde 3-phosphate = dihydroxyacetone phosphate. It functions in the pathway carbohydrate biosynthesis; gluconeogenesis. It participates in carbohydrate degradation; glycolysis; D-glyceraldehyde 3-phosphate from glycerone phosphate: step 1/1. In terms of biological role, involved in the gluconeogenesis. Catalyzes stereospecifically the conversion of dihydroxyacetone phosphate (DHAP) to D-glyceraldehyde-3-phosphate (G3P). The chain is Triosephosphate isomerase from Bacillus mycoides (strain KBAB4) (Bacillus weihenstephanensis).